The primary structure comprises 365 residues: Flagellar P-ring protein (365 aa).

Residues 1–20 (MKLPHFFVLAALVLSGAAHA) form the signal peptide.

The protein belongs to the FlgI family. As to quaternary structure, the basal body constitutes a major portion of the flagellar organelle and consists of four rings (L,P,S, and M) mounted on a central rod.

The protein resides in the periplasm. Its subcellular location is the bacterial flagellum basal body. Its function is as follows. Assembles around the rod to form the L-ring and probably protects the motor/basal body from shearing forces during rotation. In Thiobacillus denitrificans (strain ATCC 25259 / T1), this protein is Flagellar P-ring protein.